The chain runs to 130 residues: Small ribosomal subunit protein uS9 (130 aa).

The protein belongs to the universal ribosomal protein uS9 family. As to quaternary structure, part of the 30S ribosomal subunit.

This Bacillus subtilis (strain 168) protein is Small ribosomal subunit protein uS9 (rpsI).